Consider the following 320-residue polypeptide: Transcription factor bHLH34 (320 aa).

Positions 162–213 (SKPGTKACREKLRREKLNDKFMDLSSVLEPGRTPKTDKSAILDDAIRVVNQL) constitute a bHLH domain. Residues 299-320 (WSPLPPADRDTSRDLKNLPPVA) are disordered. Over residues 305-314 (ADRDTSRDLK) the composition is skewed to basic and acidic residues.

Homodimer. As to expression, expressed constitutively in roots, leaves, stems, and flowers.

It localises to the nucleus. In Arabidopsis thaliana (Mouse-ear cress), this protein is Transcription factor bHLH34 (BHLH34).